We begin with the raw amino-acid sequence, 112 residues long: Large ribosomal subunit protein uL22 (112 aa).

The protein belongs to the universal ribosomal protein uL22 family. Part of the 50S ribosomal subunit.

In terms of biological role, this protein binds specifically to 23S rRNA; its binding is stimulated by other ribosomal proteins, e.g. L4, L17, and L20. It is important during the early stages of 50S assembly. It makes multiple contacts with different domains of the 23S rRNA in the assembled 50S subunit and ribosome. The globular domain of the protein is located near the polypeptide exit tunnel on the outside of the subunit, while an extended beta-hairpin is found that lines the wall of the exit tunnel in the center of the 70S ribosome. This is Large ribosomal subunit protein uL22 from Mesoplasma florum (strain ATCC 33453 / NBRC 100688 / NCTC 11704 / L1) (Acholeplasma florum).